Consider the following 438-residue polypeptide: Probable inactive protein kinase 38 (438 aa).

The Protein kinase domain occupies 77-340 (PRFRLALGKG…FTELQPQYFL (264 aa)).

Belongs to the protein kinase superfamily. Tyr protein kinase family.

The polypeptide is Probable inactive protein kinase 38 (36) (Equus caballus (Horse)).